The primary structure comprises 125 residues: Snaclec B6 (125 aa).

Cystine bridges form between C2-C13, C30-C119, and C96-C111. Positions 9-120 (HEGHCYKVFK…CNISQYFVCQ (112 aa)) constitute a C-type lectin domain. An N-linked (GlcNAc...) asparagine glycan is attached at N95. An N-linked (GlcNAc...) asparagine glycan is attached at N112.

It belongs to the snaclec family. In terms of assembly, heterodimer; disulfide-linked. Expressed by the venom gland.

The protein localises to the secreted. In terms of biological role, interferes with one step of hemostasis (modulation of platelet aggregation, or coagulation cascade, for example). This Macrovipera lebetinus (Levantine viper) protein is Snaclec B6.